The following is a 147-amino-acid chain: TRAF-interacting protein with FHA domain-containing protein B (147 aa).

Residues 36–108 enclose the FHA domain; sequence LLVGRGQDTH…LHSVNRISFS (73 aa).

Interacts with TIFA.

Inhibits TIFA-mediated TRAF6 activation possibly by inducing a conformational change in TIFA. This chain is TRAF-interacting protein with FHA domain-containing protein B, found in Rattus norvegicus (Rat).